Reading from the N-terminus, the 423-residue chain is UPF0229 protein Pmen_4018 (423 aa).

Residues 65 to 108 (HHGRGGKQTIVHPGNKEFTAGERIPRPQGGGGGRGSGKASNSGE) form a disordered region.

The protein belongs to the UPF0229 family.

The sequence is that of UPF0229 protein Pmen_4018 from Ectopseudomonas mendocina (strain ymp) (Pseudomonas mendocina).